A 346-amino-acid polypeptide reads, in one-letter code: DNA polymerase IV 2 (346 aa).

The UmuC domain maps to 9–191 (ILHVDLDQFL…RTVEALWGVG (183 aa)). Positions 13 and 111 each coordinate Mg(2+). Glu112 is a catalytic residue.

It belongs to the DNA polymerase type-Y family. Monomer. Mg(2+) is required as a cofactor.

It is found in the cytoplasm. The enzyme catalyses DNA(n) + a 2'-deoxyribonucleoside 5'-triphosphate = DNA(n+1) + diphosphate. Its function is as follows. Poorly processive, error-prone DNA polymerase involved in untargeted mutagenesis. Copies undamaged DNA at stalled replication forks, which arise in vivo from mismatched or misaligned primer ends. These misaligned primers can be extended by PolIV. Exhibits no 3'-5' exonuclease (proofreading) activity. May be involved in translesional synthesis, in conjunction with the beta clamp from PolIII. This chain is DNA polymerase IV 2 (dinB2), found in Mycobacterium bovis (strain ATCC BAA-935 / AF2122/97).